The chain runs to 264 residues: Glutamate racemase (264 aa).

Residues 10–11 (DS) and 42–43 (YG) contribute to the substrate site. C73 serves as the catalytic Proton donor/acceptor. Residue 74–75 (NT) participates in substrate binding. C183 functions as the Proton donor/acceptor in the catalytic mechanism. Position 184–185 (184–185 (TH)) interacts with substrate.

It belongs to the aspartate/glutamate racemases family. Homodimer.

The enzyme catalyses L-glutamate = D-glutamate. The protein operates within cell wall biogenesis; peptidoglycan biosynthesis. Its function is as follows. Provides the (R)-glutamate required for cell wall biosynthesis. The chain is Glutamate racemase from Streptococcus pyogenes serotype M1.